A 251-amino-acid chain; its full sequence is Haloacid dehalogenase-like hydrolase domain-containing protein 3 (251 aa).

An N6-acetyllysine; alternate modification is found at Lys15. At Lys15 the chain carries N6-succinyllysine; alternate.

It belongs to the HAD-like hydrolase superfamily.

The protein is Haloacid dehalogenase-like hydrolase domain-containing protein 3 (HDHD3) of Homo sapiens (Human).